Reading from the N-terminus, the 900-residue chain is Alanine--tRNA ligase (900 aa).

Zn(2+) contacts are provided by His-604, His-608, Cys-708, and His-712.

This sequence belongs to the class-II aminoacyl-tRNA synthetase family. Requires Zn(2+) as cofactor.

The protein resides in the cytoplasm. It catalyses the reaction tRNA(Ala) + L-alanine + ATP = L-alanyl-tRNA(Ala) + AMP + diphosphate. Functionally, catalyzes the attachment of alanine to tRNA(Ala) in a two-step reaction: alanine is first activated by ATP to form Ala-AMP and then transferred to the acceptor end of tRNA(Ala). Also edits incorrectly charged Ser-tRNA(Ala) and Gly-tRNA(Ala) via its editing domain. The protein is Alanine--tRNA ligase of Saccharolobus islandicus (strain M.14.25 / Kamchatka #1) (Sulfolobus islandicus).